A 105-amino-acid chain; its full sequence is ESAT-6-like protein EsxU (105 aa).

It belongs to the WXG100 family. CFP-10 subfamily. Forms a tight 1:1 complex with EsxT. Complex formation results in induction of alpha-helical conformation and stability against chemical denaturation.

Its subcellular location is the secreted. This Mycobacterium tuberculosis (strain ATCC 25618 / H37Rv) protein is ESAT-6-like protein EsxU.